The following is a 281-amino-acid chain: 33 kDa chaperonin (281 aa).

Intrachain disulfides connect Cys229–Cys231 and Cys262–Cys265.

The protein belongs to the HSP33 family. Under oxidizing conditions two disulfide bonds are formed involving the reactive cysteines. Under reducing conditions zinc is bound to the reactive cysteines and the protein is inactive.

It localises to the cytoplasm. Functionally, redox regulated molecular chaperone. Protects both thermally unfolding and oxidatively damaged proteins from irreversible aggregation. Plays an important role in the bacterial defense system toward oxidative stress. This Pseudoalteromonas translucida (strain TAC 125) protein is 33 kDa chaperonin.